The following is a 308-amino-acid chain: 4-hydroxyproline 2-epimerase (308 aa).

Residue cysteine 88 is the Proton acceptor of the active site. Residues 89 to 90 (GH), histidine 208, and aspartate 232 each bind substrate. Cysteine 236 acts as the Proton donor in catalysis. 237-238 (GT) serves as a coordination point for substrate.

Belongs to the proline racemase family.

It carries out the reaction trans-4-hydroxy-L-proline = cis-4-hydroxy-D-proline. Functionally, catalyzes the reversible epimerization of cis-4-hydroxy-D-proline (c4DHyp) to trans-4-hydroxy-L-proline (t4LHyp). May be involved in a degradation pathway that allows P.putida strain KT2440 to grow on either epimer of 4-hydroxyproline, c4DHyp and t4LHyp, as the sole carbon and nitrogen source. Does not exhibit measureable racemase activity in vitro with any of the 19 natural chiral amino acid enantiomers. The chain is 4-hydroxyproline 2-epimerase from Pseudomonas putida (strain ATCC 47054 / DSM 6125 / CFBP 8728 / NCIMB 11950 / KT2440).